The following is a 215-amino-acid chain: Large ribosomal subunit protein bL25 (215 aa).

A disordered region spans residues 170 to 215 (DPDTSVASVTPPTTEEDLDTDDVDENAEPELVGAENDSADEESENK). 2 stretches are compositionally biased toward acidic residues: residues 183 to 197 (TEEDLDTDDVDENAE) and 206 to 215 (DSADEESENK).

The protein belongs to the bacterial ribosomal protein bL25 family. CTC subfamily. In terms of assembly, part of the 50S ribosomal subunit; part of the 5S rRNA/L5/L18/L25 subcomplex. Contacts the 5S rRNA. Binds to the 5S rRNA independently of L5 and L18.

This is one of the proteins that binds to the 5S RNA in the ribosome where it forms part of the central protuberance. The polypeptide is Large ribosomal subunit protein bL25 (Oceanobacillus iheyensis (strain DSM 14371 / CIP 107618 / JCM 11309 / KCTC 3954 / HTE831)).